Here is a 797-residue protein sequence, read N- to C-terminus: MDELAGGGGGGPAMASPPRQQQGPGGNMSLSPGGNGAAGGGGPPATEGAGPAAGPELSRPQQYTIPGILHYIQHEWARFEMERAHWEVERAELQARIAFLQGERKGQENLKKDLVRRIKMLEYALKQERAKYHKLKYGTELNQGDLKMPTFESEETKDTEAPTAPQNSQLTWKQGRQLLRQYLQEVGYTDTILDVRSQRVRSLLGLSNSEPNGSVETKNLEQILNGGESPKQKGQEIKRTSGDVLETFNFLENADDSDEEEENDMIEGIPEGKDKHRINKHKIGNEGLAADLTDDPDTEEALKEFDFLVTAEDGEGAGEARSSGDGTEWDKDDLSPTTEVWDVDQGLISKLKEQYKKERKGKKGVKRVNRTKLYDTIADLGDDELPLIPSGIINQSRSASTRMTDHEGARAEEAEPITFPSGGGKSFIMGSDDVLLSVLGLGDLADLTVTNDADYSYDLPANKDAFRKTWNPKYTLRSHFDGVRALAFHPVEPVLVTASEDHTLKLWNLQKTVPAKKSASLDVEPIYTFRAHIGPVLSLAISSNGEQCFSGGTDATIQWWNMPSPNVDPYDTYEPNVLAGTLIAHTDAVWGLAYSGIKNQLLSCSADGTVRLWNPQEKLPCICTYNGDKEHGIPTSVDFIGCDPAHMVTSFNTGSTVIYDLETSQSLVMLSSQMDSGLQSSNHINRVVSHPTLPVTITAHEDRHIKFFDNKTGKMIHSMVAHLDAVTSLAVDPNGIYLMSGSHDCSIRLWNLDSKTCVQEITAHRKKLDESIYDVAFHPSKAYIASAGADALAKVFV.

Position 1 is an N-acetylmethionine (Met-1). Gly residues-rich tracts occupy residues Met-1 to Pro-12 and Gly-33 to Pro-43. Positions Met-1–Pro-60 are disordered. Low complexity predominate over residues Pro-44 to Pro-55. Residues Tyr-71–Phe-79 are caveolin-binding. Positions Ala-77–Lys-136 form a coiled coil. Thr-150 carries the post-translational modification Phosphothreonine. Residues Gln-166–Leu-183 form a calmodulin-binding region. 5 positions are modified to phosphoserine: Ser-202, Ser-214, Ser-229, Ser-257, and Ser-335. The interval Asp-313–Pro-336 is disordered. WD repeat units follow at residues Ser-478–Lys-517, Ala-531–Tyr-570, Ala-584–Cys-623, Gln-679–Ser-718, Ala-721–Glu-760, and Lys-767–Phe-796.

The protein belongs to the WD repeat striatin family. Tetramerizes. Part of the core of STRIPAK complexes composed of PP2A catalytic and scaffolding subunits, the striatins (PP2A regulatory subunits), the striatin-associated proteins MOB4, STRIP1 and STRIP2, PDCD10 and members of the STE20 kinases, such as STK24 and STK26. The STRIPAK complex can be extended by adapter proteins such as SLMAP:SIKE1 or CTTNBP2NL. Interacts with CDC42BPB.

It is found in the cytoplasm. It localises to the membrane. Calmodulin-binding scaffolding protein which is the center of the striatin-interacting phosphatase and kinase (STRIPAK) complexes. STRIPAK complexes have critical roles in protein (de)phosphorylation and are regulators of multiple signaling pathways including Hippo, MAPK, nuclear receptor and cytoskeleton remodeling. Different types of STRIPAK complexes are involved in a variety of biological processes such as cell growth, differentiation, apoptosis, metabolism and immune regulation. The polypeptide is Striatin-3 (STRN3) (Bos taurus (Bovine)).